A 369-amino-acid chain; its full sequence is Tetraacyldisaccharide 4'-kinase (369 aa).

Residue 52–59 (TVGGTGKT) coordinates ATP.

Belongs to the LpxK family.

The catalysed reaction is a lipid A disaccharide + ATP = a lipid IVA + ADP + H(+). Its pathway is glycolipid biosynthesis; lipid IV(A) biosynthesis; lipid IV(A) from (3R)-3-hydroxytetradecanoyl-[acyl-carrier-protein] and UDP-N-acetyl-alpha-D-glucosamine: step 6/6. Transfers the gamma-phosphate of ATP to the 4'-position of a tetraacyldisaccharide 1-phosphate intermediate (termed DS-1-P) to form tetraacyldisaccharide 1,4'-bis-phosphate (lipid IVA). The sequence is that of Tetraacyldisaccharide 4'-kinase from Parabacteroides distasonis (strain ATCC 8503 / DSM 20701 / CIP 104284 / JCM 5825 / NCTC 11152).